We begin with the raw amino-acid sequence, 303 residues long: Acetylglutamate kinase (303 aa).

Substrate-binding positions include 76 to 77, Arg-98, and Asn-199; that span reads GG.

This sequence belongs to the acetylglutamate kinase family. ArgB subfamily.

It localises to the cytoplasm. It carries out the reaction N-acetyl-L-glutamate + ATP = N-acetyl-L-glutamyl 5-phosphate + ADP. It functions in the pathway amino-acid biosynthesis; L-arginine biosynthesis; N(2)-acetyl-L-ornithine from L-glutamate: step 2/4. Functionally, catalyzes the ATP-dependent phosphorylation of N-acetyl-L-glutamate. The protein is Acetylglutamate kinase of Clavibacter michiganensis subsp. michiganensis (strain NCPPB 382).